Reading from the N-terminus, the 221-residue chain is Tumor protein p53-inducible nuclear protein 2 (221 aa).

The LIR signature appears at 26 to 41 (VSEEDEVDGWLIIDLQ). Positions 41 to 68 (QDSYTAPPDPGASPAPAGRPPPAPSLMD) are disordered. The span at 47–64 (PPDPGASPAPAGRPPPAP) shows a compositional bias: pro residues. Position 136 is a phosphoserine (serine 136). Positions 177-210 (RQRAERHTLSAKVLQRQNRARESRSRRPKHQGSF) are disordered.

As to quaternary structure, interacts with VMP1, GABARAP, GABARAPL1, GABARAPL2, MAP1LC3A, MAP1LC3B, MAP1LC3C and THRA.

The protein resides in the cytoplasm. It localises to the cytosol. It is found in the nucleus. Its subcellular location is the PML body. The protein localises to the cytoplasmic vesicle. The protein resides in the autophagosome. In terms of biological role, dual regulator of transcription and autophagy. Positively regulates autophagy and is required for autophagosome formation and processing. May act as a scaffold protein that recruits MAP1LC3A, GABARAP and GABARAPL2 and brings them to the autophagosome membrane by interacting with VMP1 where, in cooperation with the BECN1-PI3-kinase class III complex, they trigger autophagosome development. Acts as a transcriptional activator of THRA. The polypeptide is Tumor protein p53-inducible nuclear protein 2 (Tp53inp2) (Mus musculus (Mouse)).